An 800-amino-acid polypeptide reads, in one-letter code: Protein translocase subunit SecA (800 aa).

ATP-binding positions include Q85, 103-107 (GEGKT), and D504.

It belongs to the SecA family. In terms of assembly, monomer and homodimer. Part of the essential Sec protein translocation apparatus which comprises SecA, SecYEG and auxiliary proteins SecDF. Other proteins may also be involved.

The protein resides in the cell membrane. Its subcellular location is the cytoplasm. The catalysed reaction is ATP + H2O + cellular proteinSide 1 = ADP + phosphate + cellular proteinSide 2.. Functionally, part of the Sec protein translocase complex. Interacts with the SecYEG preprotein conducting channel. Has a central role in coupling the hydrolysis of ATP to the transfer of proteins into and across the cell membrane, serving as an ATP-driven molecular motor driving the stepwise translocation of polypeptide chains across the membrane. This chain is Protein translocase subunit SecA, found in Lactobacillus delbrueckii subsp. bulgaricus (strain ATCC 11842 / DSM 20081 / BCRC 10696 / JCM 1002 / NBRC 13953 / NCIMB 11778 / NCTC 12712 / WDCM 00102 / Lb 14).